The chain runs to 293 residues: Undecaprenyl-diphosphatase (293 aa).

A run of 8 helical transmembrane segments spans residues 3–23, 43–63, 85–105, 109–129, 178–198, 203–223, 238–258, and 269–289; these read IALALKAVILGIVEGLTEFLP, KGKIFEIVIQFGAILAVCWEF, VNVIVATIPAIVLALVFGKWI, LFNPITVATAFIIGGVVILLA, FALVPGTSRSGATIIGGMLFG, VATEFSFFLAIPVIFGATVYE, IFAVGFVFAFLSAFLCVRWLL, and FAWYRIAFGIIVLLTAWTGVI.

The protein belongs to the UppP family.

Its subcellular location is the cell inner membrane. The enzyme catalyses di-trans,octa-cis-undecaprenyl diphosphate + H2O = di-trans,octa-cis-undecaprenyl phosphate + phosphate + H(+). Functionally, catalyzes the dephosphorylation of undecaprenyl diphosphate (UPP). Confers resistance to bacitracin. The chain is Undecaprenyl-diphosphatase from Cupriavidus metallidurans (strain ATCC 43123 / DSM 2839 / NBRC 102507 / CH34) (Ralstonia metallidurans).